Reading from the N-terminus, the 173-residue chain is MGLPRRAGDAAELRKSLKPLLEKRRRARINQSLSQLKGLILPLLGRENSNCSKLEKADVLEMTVRFLQELPASSWPTAAPLPCDSYREGYSACVARLARVLPACRVLEPAVSARLLEHLWRRAASATLDGGRAGDSSGPSAPAPAPASAPEPASAPVPSPPSPPCGPGLWRPW.

Positions 13–70 (LRKSLKPLLEKRRRARINQSLSQLKGLILPLLGRENSNCSKLEKADVLEMTVRFLQEL) constitute a bHLH domain. Residues 86-119 (YREGYSACVARLARVLPACRVLEPAVSARLLEHL) form the Orange domain. Residues 128-173 (LDGGRAGDSSGPSAPAPAPASAPEPASAPVPSPPSPPCGPGLWRPW) are disordered. A compositionally biased stretch (pro residues) spans 141 to 166 (APAPAPASAPEPASAPVPSPPSPPCG). Residues 170-173 (WRPW) carry the WRPW motif motif.

Transcription repression requires formation of a complex with a corepressor protein of the Groucho/TLE family. As to expression, expressed in placenta, pancreatic cancer, colon cancer with RER, cervical cancer, and in head and neck tumors.

It is found in the nucleus. In terms of biological role, transcriptional repressor of genes that require a bHLH protein for their transcription. In Homo sapiens (Human), this protein is Transcription factor HES-2 (HES2).